The sequence spans 107 residues: Ferredoxin CarAc (107 aa).

The Rieske domain occupies 6-102 (LKVCAASDMQ…VEVKEGEVYV (97 aa)). The [2Fe-2S] cluster site is built by cysteine 46, histidine 48, cysteine 65, and histidine 68.

As to quaternary structure, monomer. Carbazole 1,9a-dioxygenase complex consists of a terminal oxygenase component CarAa, a ferredoxin reductase component CarAd and a ferredoxin component CarAc. Requires [2Fe-2S] cluster as cofactor.

Part of the multicomponent carbazole 1,9a-dioxygenase (CARDO), that converts carbazole (CAR) into 2-aminobiphenyl-2,3-diol. Acts as a mediator in the electron transfer from CarAd to CarAa. The sequence is that of Ferredoxin CarAc (carAc) from Metapseudomonas resinovorans (Pseudomonas resinovorans).